The following is a 277-amino-acid chain: Alternative cytochrome c oxidase subunit 2 (277 aa).

Over 1–40 (MAVALILLLIAIGSVLFHLFSPWWWTPIATNWGYIDDTIN) the chain is Periplasmic. The chain crosses the membrane as a helical span at residues 41–61 (ITFWITGFVFTAVILFMAYCV). Over 62–83 (FRFHHKEGRQAAYNPENKKLEW) the chain is Cytoplasmic. The helical transmembrane segment at 84–104 (WLSVGTGVGVAAMLAPGLVVW) threads the bilayer. Residues 105 to 277 (HQFVTVPADA…VRAKYNSGDD (173 aa)) are Periplasmic-facing. Cu cation-binding residues include H190, C225, C229, and H233.

Belongs to the cytochrome c oxidase subunit 2 family.

The protein resides in the cell membrane. The enzyme catalyses 4 Fe(II)-[cytochrome c] + O2 + 8 H(+)(in) = 4 Fe(III)-[cytochrome c] + 2 H2O + 4 H(+)(out). Cytochrome c oxidase is the component of the respiratory chain that catalyzes the reduction of oxygen to water. Subunits 1-3 form the functional core of the enzyme complex. Subunit 2 transfers the electrons from cytochrome c via its binuclear copper A center to the bimetallic center of the catalytic subunit 1. The chain is Alternative cytochrome c oxidase subunit 2 (coxM) from Bradyrhizobium diazoefficiens (strain JCM 10833 / BCRC 13528 / IAM 13628 / NBRC 14792 / USDA 110).